The chain runs to 1003 residues: Spheroidin (1003 aa).

Position 2 is an N-acetylserine; by host (Ser-2). Positions 953–970 (DANSSSSDSCSDSSSSSE) are enriched in low complexity. A disordered region spans residues 953 to 979 (DANSSSSDSCSDSSSSSESESDSDGCC).

May form disulfide-bond-linked aggregates.

Major component of viral occlusion bodies, the protective complexes in which the virions are embedded in the cytoplasm of their insect hosts. The sequence is that of Spheroidin from Amsacta (AmEPV).